The sequence spans 154 residues: MIPCSDRIIRNAPGPFDAEVVLDYESRLLRRKRLACAGGDFMVDLAEVASLEDGDAFALSDGRIVVVRAAAEPVLVVRGPLARLAWHIGNRHTPCRIEADRLIIRQDHVLEAMLRRLGAEISHQNLPFRPEGGAYGHGRTFGHDHGHAHDHHHA.

The tract at residues 135-154 (YGHGRTFGHDHGHAHDHHHA) is disordered.

The protein belongs to the UreE family.

The protein localises to the cytoplasm. Involved in urease metallocenter assembly. Binds nickel. Probably functions as a nickel donor during metallocenter assembly. This Paracoccus denitrificans (strain Pd 1222) protein is Urease accessory protein UreE.